The chain runs to 347 residues: NADH-ubiquinone oxidoreductase chain 2 (347 aa).

11 helical membrane passes run 3 to 23 (PVVLTMILLTIMLGTVIVMTT), 25 to 45 (HWLLVWIGFEMNMLAIIPILM), 59 to 79 (YFLTQATASMLLMLAIVINLI), 96 to 116 (IIMTLALAMKLGLAPFHFWVP), 122 to 142 (IQLSSGLILLTWQKLAPMSIL), 149 to 169 (INLHLLLLMSLTSILIGGWGG), 178 to 198 (IMAYSSIAHMGWMTTIMIYNP), 200 to 220 (MALLNLTIYIILTTTTFMTFM), 237 to 257 (MPLLTSAVLMTMLSLGGLPPL), 274 to 294 (NSIIMPTIMAITALLNLFFYM), and 325 to 345 (LLSPMIILSTLILPLSPMLAL).

The protein belongs to the complex I subunit 2 family. As to quaternary structure, core subunit of respiratory chain NADH dehydrogenase (Complex I) which is composed of 45 different subunits. Interacts with TMEM242.

The protein localises to the mitochondrion inner membrane. The enzyme catalyses a ubiquinone + NADH + 5 H(+)(in) = a ubiquinol + NAD(+) + 4 H(+)(out). Core subunit of the mitochondrial membrane respiratory chain NADH dehydrogenase (Complex I) which catalyzes electron transfer from NADH through the respiratory chain, using ubiquinone as an electron acceptor. Essential for the catalytic activity and assembly of complex I. In Paranyctimene raptor (Unstriped tube-nosed fruit bat), this protein is NADH-ubiquinone oxidoreductase chain 2.